Consider the following 194-residue polypeptide: Ferredoxin, apicoplast (194 aa).

Residues 1–19 (MNIVILLLILTFSIKHSNT) constitute an apicoplast transit peptide. In terms of domain architecture, 2Fe-2S ferredoxin-type spans 99-189 (YNITLRTNDG…DCVIETHKED (91 aa)). The [2Fe-2S] cluster site is built by Cys135, Cys140, Cys143, and Cys173.

Belongs to the 2Fe2S plant-type ferredoxin family. It depends on [2Fe-2S] cluster as a cofactor.

The protein resides in the plastid. It is found in the apicoplast. Ferredoxins are iron-sulfur proteins that transfer electrons in a wide variety of metabolic reactions. By transferring electrons to 4-hydroxy-3-methylbut-2-enyl diphosphate reductase LytB/IspH, plays a role in the terminal step of the DOXP/MEP pathway for isoprenoid precursor biosynthesis. This is Ferredoxin, apicoplast from Plasmodium falciparum (isolate 3D7).